The following is a 190-amino-acid chain: GTP cyclohydrolase 1 (190 aa).

Residues cysteine 75, histidine 78, and cysteine 146 each coordinate Zn(2+).

Belongs to the GTP cyclohydrolase I family. In terms of assembly, homomer.

It catalyses the reaction GTP + H2O = 7,8-dihydroneopterin 3'-triphosphate + formate + H(+). It participates in cofactor biosynthesis; 7,8-dihydroneopterin triphosphate biosynthesis; 7,8-dihydroneopterin triphosphate from GTP: step 1/1. The protein is GTP cyclohydrolase 1 of Campylobacter lari (strain RM2100 / D67 / ATCC BAA-1060).